Reading from the N-terminus, the 309-residue chain is tRNA dimethylallyltransferase (309 aa).

Position 15 to 22 (15 to 22 (GPTASGKS)) interacts with ATP. 17 to 22 (TASGKS) provides a ligand contact to substrate. Residues 40–43 (DSRQ) are interaction with substrate tRNA.

Belongs to the IPP transferase family. As to quaternary structure, monomer. Mg(2+) is required as a cofactor.

The enzyme catalyses adenosine(37) in tRNA + dimethylallyl diphosphate = N(6)-dimethylallyladenosine(37) in tRNA + diphosphate. In terms of biological role, catalyzes the transfer of a dimethylallyl group onto the adenine at position 37 in tRNAs that read codons beginning with uridine, leading to the formation of N6-(dimethylallyl)adenosine (i(6)A). This is tRNA dimethylallyltransferase from Chlorobium phaeovibrioides (strain DSM 265 / 1930) (Prosthecochloris vibrioformis (strain DSM 265)).